Here is a 441-residue protein sequence, read N- to C-terminus: Keratin, type I cytoskeletal 15 (441 aa).

Residues 2–91 (LLLGHASTST…GGSDLLLGTS (90 aa)) form a head region. The interval 92–127 (GKEAMQNLNDRLASYLDKVRSLEGKNHELELKIKDW) is coil 1A. The 316-residue stretch at 92 to 407 (GKEAMQNLND…MLLDSEDSKG (316 aa)) folds into the IF rod domain. The interval 128–149 (YSQVIPGTGGPDARDYGHLEKE) is linker 1. Residues 150–241 (IEDLQNKVNN…KNHEEDMKAA (92 aa)) are coil 1B. Residues 242 to 261 (SSGIAGQVNVELDAAPGTNL) are linker 12. Residues 262-403 (LDELDACRRD…ATYRMLLDSE (142 aa)) form a coil 2 region. Residues 404-441 (DSKGSIINHKILTAIEKLVDGIVLSTEVLEKQIPVLSY) form a tail region.

It belongs to the intermediate filament family. Heterotetramer of two type I and two type II keratins. In terms of tissue distribution, expressed in skin.

The polypeptide is Keratin, type I cytoskeletal 15 (KRT15) (Protopterus aethiopicus (Marbled lungfish)).